Consider the following 513-residue polypeptide: ATP synthase subunit beta (513 aa).

The segment at 1-29 (MATAPATEKKAPAKKAAAPKAAAPKKAAA) is disordered. The segment covering 14-29 (KKAAAPKAAAPKKAAA) has biased composition (low complexity). An ATP-binding site is contributed by 186–193 (GGAGVGKT).

The protein belongs to the ATPase alpha/beta chains family. As to quaternary structure, F-type ATPases have 2 components, CF(1) - the catalytic core - and CF(0) - the membrane proton channel. CF(1) has five subunits: alpha(3), beta(3), gamma(1), delta(1), epsilon(1). CF(0) has three main subunits: a(1), b(2) and c(9-12). The alpha and beta chains form an alternating ring which encloses part of the gamma chain. CF(1) is attached to CF(0) by a central stalk formed by the gamma and epsilon chains, while a peripheral stalk is formed by the delta and b chains.

The protein resides in the cell inner membrane. It carries out the reaction ATP + H2O + 4 H(+)(in) = ADP + phosphate + 5 H(+)(out). In terms of biological role, produces ATP from ADP in the presence of a proton gradient across the membrane. The catalytic sites are hosted primarily by the beta subunits. This is ATP synthase subunit beta from Sphingopyxis alaskensis (strain DSM 13593 / LMG 18877 / RB2256) (Sphingomonas alaskensis).